The primary structure comprises 196 residues: GTP cyclohydrolase 1 (196 aa).

Positions 84, 87, and 157 each coordinate Zn(2+).

This sequence belongs to the GTP cyclohydrolase I family. As to quaternary structure, toroid-shaped homodecamer, composed of two pentamers of five dimers.

The enzyme catalyses GTP + H2O = 7,8-dihydroneopterin 3'-triphosphate + formate + H(+). Its pathway is cofactor biosynthesis; 7,8-dihydroneopterin triphosphate biosynthesis; 7,8-dihydroneopterin triphosphate from GTP: step 1/1. This chain is GTP cyclohydrolase 1, found in Corynebacterium glutamicum (strain ATCC 13032 / DSM 20300 / JCM 1318 / BCRC 11384 / CCUG 27702 / LMG 3730 / NBRC 12168 / NCIMB 10025 / NRRL B-2784 / 534).